The primary structure comprises 240 residues: Arginine transport ATP-binding protein ArtM (240 aa).

The region spanning 2-236 (IKVEKLSKSF…PKSKRAQDFL (235 aa)) is the ABC transporter domain. Residue 34 to 41 (GPSGSGKS) coordinates ATP.

This sequence belongs to the ABC transporter superfamily.

Its subcellular location is the cell membrane. In terms of biological role, part of a binding-protein-dependent transport system for arginine. Probably responsible for energy coupling to the transport system. This Bacillus subtilis (strain 168) protein is Arginine transport ATP-binding protein ArtM (artM).